Consider the following 180-residue polypeptide: Large ribosomal subunit protein uL5 (180 aa).

Belongs to the universal ribosomal protein uL5 family. As to quaternary structure, part of the 50S ribosomal subunit; part of the 5S rRNA/L5/L18/L25 subcomplex. Contacts the 5S rRNA and the P site tRNA. Forms a bridge to the 30S subunit in the 70S ribosome.

This is one of the proteins that bind and probably mediate the attachment of the 5S RNA into the large ribosomal subunit, where it forms part of the central protuberance. In the 70S ribosome it contacts protein S13 of the 30S subunit (bridge B1b), connecting the 2 subunits; this bridge is implicated in subunit movement. Contacts the P site tRNA; the 5S rRNA and some of its associated proteins might help stabilize positioning of ribosome-bound tRNAs. The protein is Large ribosomal subunit protein uL5 of Streptococcus suis (strain 05ZYH33).